The following is a 780-amino-acid chain: MSSGSRPSSGGGGGGGGASGGAGGGAPGGGGGGIRGFFSKLRKPSDQPNGNQVQVGTRTFEAHELQKLIPQLEEAISRKDAQLRQQQTIVEGHIKRISELEGEVTTLQRECDKLRSVLEQKAQSAASPGGQPPSPSPRTDQLGNDLQQKAVLPADGVQRAKKIAVSAEPTNFENKPATLQHYNKTVGAKQMIRDAVQKNDFLKQLAKEQIIELVNCMYEMRARAGQWVIQEGEPGDRLFVVAEGELQVSREGALLGKMRAGTVMGELAILYNCTRTASVQALTDVQLWVLDRSVFQMITQRLGMERHSQLMNFLTKVSIFQNLSEDRISKMADVMDQDYYDGGHYIIRQGEKGDAFFVINSGQVKVTQQIEGETEPREIRVLNQGDFFGERALLGEEVRTANIIAQAPGVEVLTLDRESFGKLIGDLESLKKDYGDKERLAQVVREPPSPVKIVDDFREEFAQVTLKNVKRLATLGVGGFGRVELVCVNGDKAKTFALKALKKKHIVDTRQQEHIFAERNIMMETSTDWIVKLYKTFRDQKFVYMLLEVCLGGELWTTLRDRGHFDDYTARFYVACVLEGLEYLHRKNIVYRDLKPENCLLANTGYLKLVDFGFAKKLASGRKTWTFCGTPEYVSPEIILNKGHDQAADYWALGIYICELMLGRPPFQASDPMKTYTLILKGVDALEIPNRRIGKTATALVKKLCRDNPGERLGSGSGGVNDIRKHRWFMGFDWEGLRSRTLKPPILPKVSNPADVTNFDNYPPDNDVPPDEFSGWDEGF.

Disordered regions lie at residues 1–55 (MSSG…QVQV) and 119–143 (EQKA…DQLG). A compositionally biased stretch (gly residues) spans 9–35 (SGGGGGGGGASGGAGGGAPGGGGGGIR). Over residues 46-55 (DQPNGNQVQV) the composition is skewed to polar residues. Residues 61-127 (EAHELQKLIP…LEQKAQSAAS (67 aa)) adopt a coiled-coil conformation. Residues 265-268 (GELA), 275-276 (RT), Arg-380, 389-392 (GERA), 399-400 (RT), and Tyr-434 contribute to the 3',5'-cyclic GMP site. Positions 469-729 (VKRLATLGVG…VNDIRKHRWF (261 aa)) constitute a Protein kinase domain. Residues 475–483 (LGVGGFGRV) and Lys-499 contribute to the ATP site. A Nuclear localization signal motif is present at residues 492–504 (KAKTFALKALKKK). The Proton acceptor role is filled by Asp-593. An AGC-kinase C-terminal domain is found at 730 to 780 (MGFDWEGLRSRTLKPPILPKVSNPADVTNFDNYPPDNDVPPDEFSGWDEGF). The interval 757-780 (TNFDNYPPDNDVPPDEFSGWDEGF) is disordered.

It belongs to the protein kinase superfamily. AGC Ser/Thr protein kinase family. cGMP subfamily. In terms of assembly, when phosphorylated, interacts with saeg-2. May interact with saeg-1. Mg(2+) is required as a cofactor. In terms of processing, autophosphorylated. In terms of tissue distribution, expressed in AWC sensory neurons (at protein level). Mainly expressed in head neurons, hypodermis, intestine and body wall muscles. L2 and L3 larvae show extensive expression, lower levels are observed in L4 larvae, later embryos and adults. Isoform c is expressed in a subset of neurons in the head, nerve ring, and ventral nerve cord including some motor neurons, also in several neurons in the tail, the pharyngeal marginal cells, body muscle, intestine, vulval muscles, and spermatheca.

It is found in the cytoplasm. It localises to the nucleus. The catalysed reaction is L-seryl-[protein] + ATP = O-phospho-L-seryl-[protein] + ADP + H(+). It catalyses the reaction L-threonyl-[protein] + ATP = O-phospho-L-threonyl-[protein] + ADP + H(+). Binding of cGMP results in enzyme activation. Promotes chemoreceptor gene expression in response to increased cGMP levels by antagonizing the gene repression functions of the class II HDAC hda-4 and the mef-2 transcription factor. Regulates gene expression via recruitment of a histone deacetylase complex containing hda-2, saeg-1 and saeg-2. Represses body size and lifespan through the dbl-1 and insulin pathways, respectively. May also signal through daf-3 and/or daf-5. Role in egg-laying, dauer formation and motility. Regulates behavioral responses to various chemosensory stimuli in sensory neurons. Required for the initiation of long term adaptation to prolonged odor exposure which results in a decrease in odor seeking behavior. May regulate this process by phosphorylating tax-2, a subunit of cyclic nucleotide-gated channel tax-2/tax-4. In ASH sensory neurons, negatively regulates avoidance behavior to some bitter tastants, such as quinine, probably by phosphorylating rgs-2 and rgs-3 which are 2 regulator of G-protein signaling proteins. In AWB sensory neurons, involved in avoidance behavior to some repellent odors. In ASE left (ASEL) sensory neuron, involved in the sensing of environmental alkalinity downstream of receptor-type guanylate cyclase gcy-14. In sensory neurons, involved in the signaling pathway downstream of insulin, TGF-beta and receptor-type guanylate cyclase responsible for inducing quiescence after food intake. Might play a role in aversive olfactory learning in AWC neurons when an odor is associated with food deprivation, depending on the ins-1/age-1 signal from the AIA to the AWC neurons. Probably by regulating neuronal transmission downstream of lin-3 and receptor lin-23 and phospholipase plc-3 in ALA neurons, involved in the decrease in locomotion during the quiescent state that precedes each larval molt. This Caenorhabditis elegans protein is cGMP-dependent protein kinase egl-4.